Consider the following 304-residue polypeptide: D-tagatose-1-phosphate kinase (304 aa).

Catalysis depends on D250, which acts as the Proton acceptor.

It belongs to the carbohydrate kinase PfkB family. Requires Mg(2+) as cofactor.

It carries out the reaction alpha-D-tagatopyranose 1-phosphate + ATP = D-tagatofuranose 1,6-bisphosphate + ADP + H(+). Its pathway is carbohydrate degradation. In terms of biological role, kinase involved in a D-tagatose catabolic pathway. Catalyzes the phosphorylation of D-tagatose-1-phosphate (Tag-1P) to D-tagatose-1,6-bisphosphate. This chain is D-tagatose-1-phosphate kinase, found in Klebsiella oxytoca.